A 392-amino-acid chain; its full sequence is Ceramide phosphoethanolamine synthase (392 aa).

The Lumenal segment spans residues 1 to 10; that stretch reads MIGPSSQISK. A helical membrane pass occupies residues 11-31; that stretch reads ILLTLLFLLIIFYVFMDVELY. Topologically, residues 32 to 140 are cytoplasmic; it reads LRIHNYAIER…MFDNVIGFSR (109 aa). The segment covering 59 to 82 has biased composition (low complexity); it reads SESGSGSIGGSSSSSSSSSSSTST. Residues 59 to 91 form a disordered region; that stretch reads SESGSGSIGGSSSSSSSSSSSTSTKLPTAGDRQ. Residues 141-161 traverse the membrane as a helical segment; sequence STFITPNMISFFHVGVACLAG. Residues 162–212 lie on the Lumenal side of the membrane; sequence KLVASDSLGYRRLGVLLFQIRTFLDDLDGHVARVRKHIRGERSEIGTSGYY. The helical transmembrane segment at 213 to 233 threads the bilayer; sequence VDGLCDGLGCIALLLGIFFYL. The Cytoplasmic portion of the chain corresponds to 234-271; it reads KNNPPRRGYSIIPMSDSKLPEPTMMIPKMKATTRKVAK. A helical membrane pass occupies residues 272–288; it reads NVISFTGQLLLSSTAWN. Over 289 to 319 the chain is Lumenal; the sequence is RYIAVYQNMLEREDVSGNQSHCQDYVFKSTW. A helical membrane pass occupies residues 320–340; it reads FFCVAWMWRIVNVHALLHCVL. The Cytoplasmic portion of the chain corresponds to 341 to 356; sequence LSIFCDKLWDFLRAIR. A helical transmembrane segment spans residues 357-377; the sequence is YSGYIILLVAICLTEMHILEA. The Lumenal segment spans residues 378–392; it reads QNYIFNSTACSNISL.

This sequence belongs to the CDP-alcohol phosphatidyltransferase class-I family. The cofactor is Mn(2+).

Its subcellular location is the membrane. The protein resides in the golgi apparatus membrane. The protein localises to the cell membrane. The enzyme catalyses CDP-ethanolamine + an N-acylsphing-4-enine = an N-acylsphing-4-enine 1-phosphoethanolamine + CMP + H(+). It carries out the reaction CDP-ethanolamine + an N-acyl-sphingoid base = an N-acyl-sphingoid 1-phosphoethanolamine + CMP + H(+). In terms of biological role, catalyzes the biosynthesis of ceramide phosphoethanolamine (CPE) through the transfer of a phosphatidyl head group from cytidine 5'-diphosphate (CDP)-ethanolamine on to the primary hydroxyl of ceramide. The sequence is that of Ceramide phosphoethanolamine synthase from Drosophila melanogaster (Fruit fly).